A 139-amino-acid chain; its full sequence is NADPH-dependent 7-cyano-7-deazaguanine reductase (139 aa).

Residue Cys34 is the Thioimide intermediate of the active site. The active-site Proton donor is the Asp41. Residues 56 to 58 and 75 to 76 each bind substrate; these read VEL and HE.

The protein belongs to the GTP cyclohydrolase I family. QueF type 1 subfamily.

The protein localises to the cytoplasm. The catalysed reaction is 7-aminomethyl-7-carbaguanine + 2 NADP(+) = 7-cyano-7-deazaguanine + 2 NADPH + 3 H(+). The protein operates within tRNA modification; tRNA-queuosine biosynthesis. Its function is as follows. Catalyzes the NADPH-dependent reduction of 7-cyano-7-deazaguanine (preQ0) to 7-aminomethyl-7-deazaguanine (preQ1). This Thiobacillus denitrificans (strain ATCC 25259 / T1) protein is NADPH-dependent 7-cyano-7-deazaguanine reductase.